We begin with the raw amino-acid sequence, 538 residues long: MNYLNKINKINNKLFYSTTSSSNGIKNVVINNKDYLKSLKTNEIWELIVGIEVHAQTKTKEKLFSNSLNIGSMEGFKANSRVSFVDAAFPGALPVLNDKCVEQAIKTGLSIGGTINRYSFFDRKHYFYQDLPQGYQITQLTEPIVKGGSIELELSDGRQHQIRISHIQLEQDSGKSIHDLHPTKSLVDLNRAGIGLMEIVSHADFTSSEQVGCYIQKLQHLLKHIGSSDANMQFGEMRCDVNISVHKPNTEFGTRVELKNMISAKAIVSSIDSEAIRQIDLLENQNKIQRETRGFNQETGETYHLRTKEDEVDYRFFPDPDLPPLIISSERIETIKQQLGELPQDMKKRLIKQYSLTNYDAELLIQDQSIAKFFENSIIFNQNHNQKQRDIKKILNFLLRDIFSWLNSNNIQDFNSIINENQLSIEKFTQLLDLIEQGYISSNIGKTILFQILNGSDNRSPKDLIDSQGLSQISDDSLLDQLVQQLVENHPNEVTEYHQGKQRVYKFFMGEIMKKTKGRSNPEIVNNLLKKYLDLKKK.

This sequence belongs to the GatB/GatE family. GatB subfamily. As to quaternary structure, subunit of the heterotrimeric GatCAB amidotransferase (AdT) complex, composed of A, B and C subunits.

The protein resides in the mitochondrion. The catalysed reaction is L-glutamyl-tRNA(Gln) + L-glutamine + ATP + H2O = L-glutaminyl-tRNA(Gln) + L-glutamate + ADP + phosphate + H(+). In terms of biological role, allows the formation of correctly charged Gln-tRNA(Gln) through the transamidation of misacylated Glu-tRNA(Gln) in the mitochondria. The reaction takes place in the presence of glutamine and ATP through an activated gamma-phospho-Glu-tRNA(Gln). The polypeptide is Glutamyl-tRNA(Gln) amidotransferase subunit B, mitochondrial (Dictyostelium discoideum (Social amoeba)).